Here is a 200-residue protein sequence, read N- to C-terminus: UDP-N-acetylglucosamine transferase subunit ALG13 (200 aa).

The protein belongs to the glycosyltransferase 28 family. Heterodimer with ALG14 to form a functional enzyme.

The protein localises to the endoplasmic reticulum. It catalyses the reaction an N-acetyl-alpha-D-glucosaminyl-diphospho-di-trans,poly-cis-dolichol + UDP-N-acetyl-alpha-D-glucosamine = an N,N'-diacetylchitobiosyl-diphospho-di-trans,poly-cis-dolichol + UDP + H(+). Involved in protein N-glycosylation. Essential for the second step of the dolichol-linked oligosaccharide pathway. The polypeptide is UDP-N-acetylglucosamine transferase subunit ALG13 (ALG13) (Cryptococcus neoformans var. neoformans serotype D (strain B-3501A) (Filobasidiella neoformans)).